We begin with the raw amino-acid sequence, 80 residues long: EMBRYO SURROUNDING FACTOR 1-like protein 1 (80 aa).

A signal peptide spans Met-1–Cys-22. 4 cysteine pairs are disulfide-bonded: Cys-38–Cys-52, Cys-43–Cys-78, Cys-50–Cys-74, and Cys-53–Cys-64.

Belongs to the MEG family. In terms of tissue distribution, expressed in leaves.

In Arabidopsis thaliana (Mouse-ear cress), this protein is EMBRYO SURROUNDING FACTOR 1-like protein 1 (ESFL1).